Reading from the N-terminus, the 198-residue chain is Outer-membrane lipoprotein carrier protein (198 aa).

The first 17 residues, 1 to 17 (MKKILLSLCFLSSVAFA), serve as a signal peptide directing secretion.

It belongs to the LolA family. As to quaternary structure, monomer.

The protein localises to the periplasm. Participates in the translocation of lipoproteins from the inner membrane to the outer membrane. Only forms a complex with a lipoprotein if the residue after the N-terminal Cys is not an aspartate (The Asp acts as a targeting signal to indicate that the lipoprotein should stay in the inner membrane). The chain is Outer-membrane lipoprotein carrier protein from Aliivibrio salmonicida (strain LFI1238) (Vibrio salmonicida (strain LFI1238)).